Consider the following 243-residue polypeptide: Probable 2-phosphosulfolactate phosphatase (243 aa).

Belongs to the ComB family. The cofactor is Mg(2+).

It catalyses the reaction (2R)-O-phospho-3-sulfolactate + H2O = (2R)-3-sulfolactate + phosphate. The polypeptide is Probable 2-phosphosulfolactate phosphatase (Prochlorococcus marinus (strain SARG / CCMP1375 / SS120)).